Consider the following 454-residue polypeptide: MSNLPSEPEFEQAYKELAYTLENSSLFQKHPEYRTALTVASIPERVIQFRVVWEDDNGNVQVNRGYRVQFNSALGPYKGGLRLHPSVNLSILKFLGFEQIFKNALTGLSMGGGKGGADFDPKGKSDAEIRRFCCAFMAELHKHIGADTDVPAGDIGVGGREIGYMFGAYRKAANRFEGVLTGKGLSWGGSLIRPEATGYGLVYYVGHMLEYSGAGSYAGKRVALSGSGNVAQYAALKLIELGATVVSLSDSKGALVATGESGITVEDINAVMAIKEARQSLTSFQHAGHLKWIEGARPWLHVGKVDIALPCATQNEVSKEEAEGLLAAGCKFVAEGSNMGCTLEAIEVFENNRKEKKGEAVWYAPGKAANCGGVAVSGLEMAQNSQRLNWTQAEVDEKLKDIMKNAFFNGLNTAKTYVEAAEGELPSLVAGSNIAGFVKVAQAMHDQGDWWSKN.

Ser-2 carries the post-translational modification N-acetylserine. Residue Lys-114 is part of the active site.

This sequence belongs to the Glu/Leu/Phe/Val dehydrogenases family. As to quaternary structure, homohexamer.

It catalyses the reaction L-glutamate + NADP(+) + H2O = 2-oxoglutarate + NH4(+) + NADPH + H(+). The polypeptide is NADP-specific glutamate dehydrogenase (gdh) (Neurospora crassa (strain ATCC 24698 / 74-OR23-1A / CBS 708.71 / DSM 1257 / FGSC 987)).